We begin with the raw amino-acid sequence, 151 residues long: NPC intracellular cholesterol transporter 2 (151 aa).

Positions 1-19 (MRFLAATFLLLALSTAAQA) are cleaved as a signal peptide. 3 disulfide bridges follow: Cys27–Cys140, Cys42–Cys47, and Cys93–Cys99. The N-linked (GlcNAc...) asparagine glycan is linked to Asn58. The residue at position 116 (Lys116) is an N6-acetyllysine. The N-linked (GlcNAc...) asparagine glycan is linked to Asn135.

Belongs to the NPC2 family. In terms of assembly, interacts with NPC1 (via the second lumenal domain) in a cholestrol-dependent manner. Interacts with NUS1/NgBR, the interaction stabilizes NCP2 and regulates cholesterol trafficking. Interacts with DHDDS. Interacts with NEDD4L (via C2 domain). Interacts with NPC1L1. As to expression, detected in gallbladder bile. Detected in fibroblasts, kidney, liver, spleen, small intestine, placenta and testis (at protein level). Epididymis.

It localises to the secreted. It is found in the endoplasmic reticulum. The protein localises to the lysosome. The catalysed reaction is cholesterol(in) = cholesterol(out). Its function is as follows. Intracellular cholesterol transporter which acts in concert with NPC1 and plays an important role in the egress of cholesterol from the lysosomal compartment. Unesterified cholesterol that has been released from LDLs in the lumen of the late endosomes/lysosomes is transferred by NPC2 to the cholesterol-binding pocket in the N-terminal domain of NPC1. May bind and mobilize cholesterol that is associated with membranes. NPC2 binds cholesterol with a 1:1 stoichiometry. Can bind a variety of sterols, including lathosterol, desmosterol and the plant sterols stigmasterol and beta-sitosterol. The secreted form of NCP2 regulates biliary cholesterol secretion via stimulation of ABCG5/ABCG8-mediated cholesterol transport. This is NPC intracellular cholesterol transporter 2 from Homo sapiens (Human).